Reading from the N-terminus, the 935-residue chain is Lon protease homolog 2, peroxisomal (935 aa).

The Lon N-terminal domain occupies 12–296 (LPVHRLERNL…NLRRLVEEMG (285 aa)). Position 452-459 (452-459 (GPPGVGKT)) interacts with ATP. One can recognise a Lon proteolytic domain in the interval 692–922 (QKGYGVVNGL…SDVLASVWEG (231 aa)). Residues Ser789 and Lys832 contribute to the active site. Positions 933–935 (ARI) match the Microbody targeting signal motif.

This sequence belongs to the peptidase S16 family.

It localises to the peroxisome matrix. The catalysed reaction is Hydrolysis of proteins in presence of ATP.. In terms of biological role, ATP-dependent serine protease that mediates the selective degradation of misfolded and unassembled polypeptides in the peroxisomal matrix. Necessary for type 2 peroxisome targeting signal (PTS2)-containing protein processing and facilitates peroxisome matrix protein import. In Pichia angusta (Yeast), this protein is Lon protease homolog 2, peroxisomal (PLN).